The following is a 631-amino-acid chain: Dolichyl-diphosphooligosaccharide--protein glycosyltransferase subunit 2 (631 aa).

Positions methionine 1–alanine 22 are cleaved as a signal peptide. The Lumenal portion of the chain corresponds to leucine 23–valine 540. The N-linked (GlcNAc...) asparagine glycan is linked to asparagine 106. Lysine 154 is covalently cross-linked (Glycyl lysine isopeptide (Lys-Gly) (interchain with G-Cter in ubiquitin)). The chain crosses the membrane as a helical span at residues valine 541–isoleucine 561. Over arginine 562–threonine 571 the chain is Cytoplasmic. The chain crosses the membrane as a helical span at residues phenylalanine 572–valine 592. Residues tyrosine 593–glutamine 596 are Lumenal-facing. Residues leucine 597–glycine 617 traverse the membrane as a helical segment. Residues asparagine 618 to histidine 631 lie on the Cytoplasmic side of the membrane.

This sequence belongs to the SWP1 family. As to quaternary structure, component of the oligosaccharyltransferase (OST) complex. OST exists in two different complex forms which contain common core subunits RPN1, RPN2, OST48, OST4, DAD1 and TMEM258, either STT3A or STT3B as catalytic subunits, and form-specific accessory subunits. STT3A complex assembly occurs through the formation of 3 subcomplexes. Subcomplex 1 contains RPN1 and TMEM258, subcomplex 2 contains the STT3A-specific subunits STT3A, DC2/OSTC, and KCP2 as well as the core subunit OST4, and subcomplex 3 contains RPN2, DAD1, and OST48. The STT3A complex can form stable complexes with the Sec61 complex or with both the Sec61 and TRAP complexes. Interacts with DDI2. Interacts with TMEM35A/NACHO.

Its subcellular location is the endoplasmic reticulum. The protein localises to the endoplasmic reticulum membrane. Its pathway is protein modification; protein glycosylation. Its function is as follows. Subunit of the oligosaccharyl transferase (OST) complex that catalyzes the initial transfer of a defined glycan (Glc(3)Man(9)GlcNAc(2) in eukaryotes) from the lipid carrier dolichol-pyrophosphate to an asparagine residue within an Asn-X-Ser/Thr consensus motif in nascent polypeptide chains, the first step in protein N-glycosylation. N-glycosylation occurs cotranslationally and the complex associates with the Sec61 complex at the channel-forming translocon complex that mediates protein translocation across the endoplasmic reticulum (ER). All subunits are required for a maximal enzyme activity. The protein is Dolichyl-diphosphooligosaccharide--protein glycosyltransferase subunit 2 of Canis lupus familiaris (Dog).